Reading from the N-terminus, the 319-residue chain is Acetyl-coenzyme A carboxylase carboxyl transferase subunit alpha (319 aa).

In terms of domain architecture, CoA carboxyltransferase C-terminal spans asparagine 35 to aspartate 296.

The protein belongs to the AccA family. As to quaternary structure, acetyl-CoA carboxylase is a heterohexamer composed of biotin carboxyl carrier protein (AccB), biotin carboxylase (AccC) and two subunits each of ACCase subunit alpha (AccA) and ACCase subunit beta (AccD).

The protein localises to the cytoplasm. The catalysed reaction is N(6)-carboxybiotinyl-L-lysyl-[protein] + acetyl-CoA = N(6)-biotinyl-L-lysyl-[protein] + malonyl-CoA. Its pathway is lipid metabolism; malonyl-CoA biosynthesis; malonyl-CoA from acetyl-CoA: step 1/1. Its function is as follows. Component of the acetyl coenzyme A carboxylase (ACC) complex. First, biotin carboxylase catalyzes the carboxylation of biotin on its carrier protein (BCCP) and then the CO(2) group is transferred by the carboxyltransferase to acetyl-CoA to form malonyl-CoA. This is Acetyl-coenzyme A carboxylase carboxyl transferase subunit alpha from Shigella sonnei (strain Ss046).